A 329-amino-acid polypeptide reads, in one-letter code: Cytosolic arginine sensor for mTORC1 subunit 1 (329 aa).

Position 14 is a phosphoserine; by PKB/AKT1 (serine 14). ACT domains lie at 72–138 (AEAT…HTLA) and 260–321 (GELW…EVLQ). Residues 111 to 112 (SV), glycine 274, 280 to 281 (IV), and 300 to 304 (TFNFD) contribute to the L-arginine site.

Belongs to the GATS family. In terms of assembly, forms homodimers and heterodimers with CASTOR2. Interacts with the GATOR2 complex which is composed of MIOS, SEC13, SEH1L, WDR24 and WDR59; the interaction is negatively regulated by arginine. Interacts with TM4SF5; the interaction is positively regulated by leucine and is negatively regulated by arginine. Phosphorylation at Ser-14 by AKT1, promoting the interaction between CASTOR1 and RNF167. In terms of processing, ubiquitinated by RNF167 via 'Lys-29'-polyubiquitination, leading to its degradation, releasing the GATOR2 complex. Ubiquitination by RNF167 is promoted by phosphorylation at Ser-14 by AKT1. In terms of tissue distribution, widely expressed.

It localises to the cytoplasm. The protein resides in the cytosol. In terms of biological role, functions as an intracellular arginine sensor within the amino acid-sensing branch of the TORC1 signaling pathway. As a homodimer or a heterodimer with CASTOR2, binds and inhibits the GATOR subcomplex GATOR2 and thereby mTORC1. Binding of arginine to CASTOR1 allosterically disrupts the interaction of CASTOR1-containing dimers with GATOR2 which can in turn activate mTORC1 and the TORC1 signaling pathway. The polypeptide is Cytosolic arginine sensor for mTORC1 subunit 1 (Homo sapiens (Human)).